The chain runs to 434 residues: Trigger factor (434 aa).

In terms of domain architecture, PPIase FKBP-type spans 160-245 (GDKVKMNFVG…LTEVQAAQLP (86 aa)).

Belongs to the FKBP-type PPIase family. Tig subfamily.

It is found in the cytoplasm. The enzyme catalyses [protein]-peptidylproline (omega=180) = [protein]-peptidylproline (omega=0). Involved in protein export. Acts as a chaperone by maintaining the newly synthesized protein in an open conformation. Functions as a peptidyl-prolyl cis-trans isomerase. This Shewanella denitrificans (strain OS217 / ATCC BAA-1090 / DSM 15013) protein is Trigger factor.